A 417-amino-acid polypeptide reads, in one-letter code: Tyrosine--tRNA ligase (417 aa).

An L-tyrosine-binding site is contributed by Y34. Residues 39–48 carry the 'HIGH' region motif; sequence PTAKSIHIGN. L-tyrosine contacts are provided by Y165 and Q169. A 'KMSKS' region motif is present at residues 227-231; sequence KFGKS. An ATP-binding site is contributed by K230. The 68-residue stretch at 349 to 416 folds into the S4 RNA-binding domain; the sequence is TDVVELLVKD…GKKKYFLAKV (68 aa).

This sequence belongs to the class-I aminoacyl-tRNA synthetase family. TyrS type 1 subfamily. In terms of assembly, homodimer.

It is found in the cytoplasm. The catalysed reaction is tRNA(Tyr) + L-tyrosine + ATP = L-tyrosyl-tRNA(Tyr) + AMP + diphosphate + H(+). In terms of biological role, catalyzes the attachment of tyrosine to tRNA(Tyr) in a two-step reaction: tyrosine is first activated by ATP to form Tyr-AMP and then transferred to the acceptor end of tRNA(Tyr). In Oenococcus oeni (strain ATCC BAA-331 / PSU-1), this protein is Tyrosine--tRNA ligase.